We begin with the raw amino-acid sequence, 416 residues long: Phosphoribosylamine--glycine ligase (416 aa).

In terms of domain architecture, ATP-grasp spans Lys107–Thr303. Leu133–Ser184 is an ATP binding site. Mg(2+)-binding residues include Glu273 and Asn275.

It belongs to the GARS family. Requires Mg(2+) as cofactor. It depends on Mn(2+) as a cofactor.

The catalysed reaction is 5-phospho-beta-D-ribosylamine + glycine + ATP = N(1)-(5-phospho-beta-D-ribosyl)glycinamide + ADP + phosphate + H(+). It functions in the pathway purine metabolism; IMP biosynthesis via de novo pathway; N(1)-(5-phospho-D-ribosyl)glycinamide from 5-phospho-alpha-D-ribose 1-diphosphate: step 2/2. The sequence is that of Phosphoribosylamine--glycine ligase from Streptomyces coelicolor (strain ATCC BAA-471 / A3(2) / M145).